We begin with the raw amino-acid sequence, 669 residues long: uncharacterized protein (669 aa).

Helical transmembrane passes span 9-29 (PLVI…IFIA), 48-68 (FSWF…ILSV), 87-107 (FLSW…MFFG), 139-159 (WGIH…YFGF), 186-206 (AIDV…LGFG), 224-244 (SFAL…FSAI), 259-279 (LTLA…LYLL), 314-334 (WTVL…LFIA), 345-365 (FIFG…TVFG), 397-417 (YLPL…LFFI), 444-464 (AIMW…SGGL), and 470-490 (MTLI…FSLW).

The protein belongs to the BCCT transporter (TC 2.A.15) family.

The protein resides in the cell inner membrane. This is an uncharacterized protein from Haemophilus influenzae (strain ATCC 51907 / DSM 11121 / KW20 / Rd).